Consider the following 260-residue polypeptide: Snake venom serine protease homolog (260 aa).

An N-terminal signal peptide occupies residues methionine 1–alanine 18. A propeptide spanning residues glutamine 19–leucine 24 is cleaved from the precursor. A Peptidase S1 domain is found at isoleucine 25–alanine 251. Intrachain disulfides connect cysteine 31–cysteine 165, cysteine 52–cysteine 68, cysteine 100–cysteine 258, cysteine 144–cysteine 212, cysteine 176–cysteine 191, and cysteine 202–cysteine 227. N-linked (GlcNAc...) asparagine glycans are attached at residues asparagine 123 and asparagine 124. Asparagine 253 carries an N-linked (GlcNAc...) asparagine glycan.

It belongs to the peptidase S1 family. Snake venom subfamily. In terms of tissue distribution, expressed by the venom gland.

It is found in the secreted. In terms of biological role, snake venom serine protease homolog that may act in the hemostasis system of the prey. The protein is Snake venom serine protease homolog of Protobothrops jerdonii (Jerdon's pitviper).